A 324-amino-acid polypeptide reads, in one-letter code: GDP-mannose transporter (324 aa).

The Cytoplasmic portion of the chain corresponds to 1-13 (MSELKSRIGNSGS). Residues 14–34 (IANSGPVSILCYCASSILMTV) form a helical membrane-spanning segment. At 35 to 44 (TNKFVVNTDG) the chain is on the lumenal side. A helical membrane pass occupies residues 45-65 (FNMFFVMLFAQSLVCTMCLMV). At 66–76 (LKMFGYAKYRP) the chain is on the cytoplasmic side. Residues 77–97 (LNLIDVKNWLPISFLLVFMIF) traverse the membrane as a helical segment. Topologically, residues 98–116 (TSAKALKYMPVPIYTIFKN) are lumenal. Asn116 is a glycosylation site (N-linked (GlcNAc...) asparagine). The helical transmembrane segment at 117-137 (LTIILIAYGEVLFFGGSVTPM) threads the bilayer. Position 138 (Glu138) is a topological domain, cytoplasmic. A helical membrane pass occupies residues 139 to 159 (LSSFILMVLSSVVASLGDQQA). Over 160-170 (AKIAQPLANNS) the chain is Lumenal. N-linked (GlcNAc...) asparagine glycosylation is present at Asn168. Residues 171 to 191 (ILSPEYYWMFLNCICSASFVL) form a helical membrane-spanning segment. Residues 192 to 204 (IMRKRIKLTNFKD) are Cytoplasmic-facing. The helical transmembrane segment at 205–225 (YDTMFYNNALALPILLGFSFL) threads the bilayer. The Lumenal portion of the chain corresponds to 226–243 (SEDWSSENLAQNFSGESL). Residue Asn237 is glycosylated (N-linked (GlcNAc...) asparagine). Residues 244–264 (SAMIISGMTSVGISYCSGWCV) form a helical membrane-spanning segment. The Cytoplasmic segment spans residues 265–270 (RATSST). The chain crosses the membrane as a helical span at residues 271–291 (TYSMVGALNKLPIALAGLIFF). Over 292–295 (DAPR) the chain is Lumenal. A helical transmembrane segment spans residues 296-316 (NFLSIMSIFIGFASGLSYAVA). The Cytoplasmic portion of the chain corresponds to 317–324 (KQKKVQKN).

It belongs to the TPT transporter family. SLC35D subfamily. As to quaternary structure, homooligomer.

The protein resides in the golgi apparatus membrane. It is found in the cytoplasmic vesicle membrane. Its subcellular location is the endoplasmic reticulum membrane. Its function is as follows. Involved in the import of GDP-mannose from the cytoplasm into the Golgi lumen. The chain is GDP-mannose transporter (VRG4) from Candida glabrata (strain ATCC 2001 / BCRC 20586 / JCM 3761 / NBRC 0622 / NRRL Y-65 / CBS 138) (Yeast).